A 568-amino-acid chain; its full sequence is Estrogen receptor beta (568 aa).

Positions 1-177 (MHQQSPVDDV…SLRGKADMHY (177 aa)) are modulating. 2 NR C4-type zinc fingers span residues 178 to 198 (CAVC…CEGC) and 214 to 238 (CPAT…LRKC). Residues 178–243 (CAVCSDYASG…RLRKCYEVGM (66 aa)) constitute a DNA-binding region (nuclear receptor). In terms of domain architecture, NR LBD spans 300–536 (TPEELIARIM…DLLLEMLDAH (237 aa)).

Belongs to the nuclear hormone receptor family. NR3 subfamily. Binds DNA as a homodimer. Can form a heterodimer with ER-alpha.

The protein localises to the nucleus. In terms of biological role, binds estrogens with an affinity similar to that of ER-alpha, and activates expression of reporter genes containing estrogen response elements (ERE) in an estrogen-dependent manner. The chain is Estrogen receptor beta (esr2) from Oncorhynchus mykiss (Rainbow trout).